A 68-amino-acid chain; its full sequence is MADKDFGLNDIVEMKKPHPCGANSWKIIRMGMDIRIKCEGCSHSVMIPRREFERKLKKVLVKHEEPTS.

This is an uncharacterized protein from Bacillus subtilis (strain 168).